A 222-amino-acid chain; its full sequence is Methylthioribulose-1-phosphate dehydratase (222 aa).

Positions 94 and 96 each coordinate Zn(2+).

The protein belongs to the aldolase class II family. MtnB subfamily. Zn(2+) serves as cofactor.

The catalysed reaction is 5-(methylsulfanyl)-D-ribulose 1-phosphate = 5-methylsulfanyl-2,3-dioxopentyl phosphate + H2O. It participates in amino-acid biosynthesis; L-methionine biosynthesis via salvage pathway; L-methionine from S-methyl-5-thio-alpha-D-ribose 1-phosphate: step 2/6. In terms of biological role, catalyzes the dehydration of methylthioribulose-1-phosphate (MTRu-1-P) into 2,3-diketo-5-methylthiopentyl-1-phosphate (DK-MTP-1-P). The protein is Methylthioribulose-1-phosphate dehydratase of Yersinia pseudotuberculosis serotype IB (strain PB1/+).